Here is a 212-residue protein sequence, read N- to C-terminus: Peptide methionine sulfoxide reductase MsrA (212 aa).

Residue Cys-52 is part of the active site.

The protein belongs to the MsrA Met sulfoxide reductase family.

It catalyses the reaction L-methionyl-[protein] + [thioredoxin]-disulfide + H2O = L-methionyl-(S)-S-oxide-[protein] + [thioredoxin]-dithiol. It carries out the reaction [thioredoxin]-disulfide + L-methionine + H2O = L-methionine (S)-S-oxide + [thioredoxin]-dithiol. Its function is as follows. Has an important function as a repair enzyme for proteins that have been inactivated by oxidation. Catalyzes the reversible oxidation-reduction of methionine sulfoxide in proteins to methionine. This chain is Peptide methionine sulfoxide reductase MsrA, found in Cronobacter sakazakii (strain ATCC BAA-894) (Enterobacter sakazakii).